We begin with the raw amino-acid sequence, 321 residues long: D-alanine--D-alanine ligase (321 aa).

The ATP-grasp domain occupies 121-315; the sequence is RSWFLTNNIN…FTNLIEEIIK (195 aa). Residue 147–199 coordinates ATP; that stretch reads PMKRPYVIKPLTQGSSIGVEVIFAEDNFNFADYDFPYGDQVIIEQYIKGRELQ. The Mg(2+) site is built by Glu-268, Glu-282, and Asn-284.

This sequence belongs to the D-alanine--D-alanine ligase family. Mg(2+) serves as cofactor. The cofactor is Mn(2+).

The protein localises to the cytoplasm. It carries out the reaction 2 D-alanine + ATP = D-alanyl-D-alanine + ADP + phosphate + H(+). It functions in the pathway cell wall biogenesis; peptidoglycan biosynthesis. In terms of biological role, cell wall formation. The sequence is that of D-alanine--D-alanine ligase from Rickettsia massiliae (strain Mtu5).